The primary structure comprises 144 residues: Universal stress protein A homolog 1 (144 aa).

Belongs to the universal stress protein A family. In terms of assembly, homodimer.

The protein resides in the cytoplasm. Its function is as follows. Involved in stress response. In Coxiella burnetii (strain RSA 493 / Nine Mile phase I), this protein is Universal stress protein A homolog 1 (uspA1).